The sequence spans 448 residues: tRNA wybutosine-synthesizing protein 2 homolog (448 aa).

S-adenosyl-L-methionine is bound by residues S218, K225, E265, and 293–294 (DN).

This sequence belongs to the class I-like SAM-binding methyltransferase superfamily. TRM5/TYW2 family.

It catalyses the reaction 4-demethylwyosine(37) in tRNA(Phe) + S-adenosyl-L-methionine = 4-demethyl-7-[(3S)-3-amino-3-carboxypropyl]wyosine(37) in tRNA(Phe) + S-methyl-5'-thioadenosine + H(+). It participates in tRNA modification; wybutosine-tRNA(Phe) biosynthesis. S-adenosyl-L-methionine-dependent transferase that acts as a component of the wybutosine biosynthesis pathway. Wybutosine is a hyper modified guanosine with a tricyclic base found at the 3'-position adjacent to the anticodon of eukaryotic phenylalanine tRNA. Catalyzes the transfer of the alpha-amino-alpha-carboxypropyl (acp) group from S-adenosyl-L-methionine to the C-7 position of 4-demethylwyosine (imG-14) to produce wybutosine-86. In Macaca fascicularis (Crab-eating macaque), this protein is tRNA wybutosine-synthesizing protein 2 homolog (TRMT12).